The sequence spans 141 residues: HTH-type transcriptional repressor NsrR (141 aa).

Residues 2-129 (QLTSFTDYGL…DNYTLADLVE (128 aa)) form the HTH rrf2-type domain. The segment at residues 28–51 (ISEVTDVYGVSRNHMVKIINQLSR) is a DNA-binding region (H-T-H motif). [2Fe-2S] cluster-binding residues include Cys91, Cys96, and Cys102.

It depends on [2Fe-2S] cluster as a cofactor.

Its function is as follows. Nitric oxide-sensitive repressor of genes involved in protecting the cell against nitrosative stress. May require iron for activity. In Escherichia coli O127:H6 (strain E2348/69 / EPEC), this protein is HTH-type transcriptional repressor NsrR.